The primary structure comprises 297 residues: MVEVRVPATSANIGSGFDCLGVAVNMYNKFFVEEIEEGLIFEGCADKFKNEDNLIYVAMKKCFDKIGYKPTGLRIKIESDIPVSRGLGSSAACVVGGIVSANELAGGVLNKKELLDLAVEVEGHPDNVNPAFCGGMTASISDNREVIYSKVKVSEGIKFCALIPDFTLSTEKARAVLPKSIDYKDGIFNVGRTALMISALNNGDFHLIKYACKDKLHQDYRAKLIENFYSIKEECEKLNSLGVFLSGAGPTIMVMLREEDKDFSKNIKSFLETLKNKWEVRELKIDKLGTVVNNRKV.

Residue 82-92 (PVSRGLGSSAA) participates in ATP binding.

The protein belongs to the GHMP kinase family. Homoserine kinase subfamily.

It localises to the cytoplasm. It carries out the reaction L-homoserine + ATP = O-phospho-L-homoserine + ADP + H(+). The protein operates within amino-acid biosynthesis; L-threonine biosynthesis; L-threonine from L-aspartate: step 4/5. Functionally, catalyzes the ATP-dependent phosphorylation of L-homoserine to L-homoserine phosphate. This is Homoserine kinase from Clostridium botulinum (strain 657 / Type Ba4).